The chain runs to 557 residues: Dihydroxy-acid dehydratase (557 aa).

Aspartate 78 is a binding site for Mg(2+). Position 119 (cysteine 119) interacts with [2Fe-2S] cluster. Positions 120 and 121 each coordinate Mg(2+). Residue lysine 121 is modified to N6-carboxylysine. Cysteine 192 lines the [2Fe-2S] cluster pocket. Glutamate 442 contacts Mg(2+). Serine 468 functions as the Proton acceptor in the catalytic mechanism.

The protein belongs to the IlvD/Edd family. As to quaternary structure, homodimer. Requires [2Fe-2S] cluster as cofactor. The cofactor is Mg(2+).

It carries out the reaction (2R)-2,3-dihydroxy-3-methylbutanoate = 3-methyl-2-oxobutanoate + H2O. It catalyses the reaction (2R,3R)-2,3-dihydroxy-3-methylpentanoate = (S)-3-methyl-2-oxopentanoate + H2O. The protein operates within amino-acid biosynthesis; L-isoleucine biosynthesis; L-isoleucine from 2-oxobutanoate: step 3/4. It participates in amino-acid biosynthesis; L-valine biosynthesis; L-valine from pyruvate: step 3/4. In terms of biological role, functions in the biosynthesis of branched-chain amino acids. Catalyzes the dehydration of (2R,3R)-2,3-dihydroxy-3-methylpentanoate (2,3-dihydroxy-3-methylvalerate) into 2-oxo-3-methylpentanoate (2-oxo-3-methylvalerate) and of (2R)-2,3-dihydroxy-3-methylbutanoate (2,3-dihydroxyisovalerate) into 2-oxo-3-methylbutanoate (2-oxoisovalerate), the penultimate precursor to L-isoleucine and L-valine, respectively. The chain is Dihydroxy-acid dehydratase from Bacillus thuringiensis subsp. konkukian (strain 97-27).